The primary structure comprises 67 residues: Beta-defensin 9 (67 aa).

The first 24 residues, 1–24, serve as a signal peptide directing secretion; it reads MRTLCSLLLICCLLFSYTTPAANS. Cystine bridges form between cysteine 34–cysteine 62, cysteine 41–cysteine 55, and cysteine 45–cysteine 63.

Belongs to the beta-defensin family. Weakly expressed in adult and neonatal brain.

It is found in the secreted. Has antibacterial activity. The chain is Beta-defensin 9 (Defb9) from Mus musculus (Mouse).